A 548-amino-acid polypeptide reads, in one-letter code: CTP synthase (548 aa).

The segment at 1-267 is amidoligase domain; the sequence is MKTKFIFITG…DQKIAIMLQL (267 aa). Residue serine 14 participates in CTP binding. Serine 14 contacts UTP. Residues 15-20 and aspartate 72 contribute to the ATP site; that span reads SLGKGL. The Mg(2+) site is built by aspartate 72 and glutamate 141. CTP-binding positions include 148–150, 188–193, and lysine 224; these read DIE and KTKPTQ. UTP contacts are provided by residues 188–193 and lysine 224; that span reads KTKPTQ. In terms of domain architecture, Glutamine amidotransferase type-1 spans 292 to 545; the sequence is TIGIVGKYVD…IKAAGKQAVK (254 aa). Glycine 354 provides a ligand contact to L-glutamine. The active-site Nucleophile; for glutamine hydrolysis is the cysteine 381. Residues 382–385, glutamate 405, and arginine 473 each bind L-glutamine; that span reads LGMQ. Active-site residues include histidine 518 and glutamate 520.

Belongs to the CTP synthase family. As to quaternary structure, homotetramer.

It catalyses the reaction UTP + L-glutamine + ATP + H2O = CTP + L-glutamate + ADP + phosphate + 2 H(+). The catalysed reaction is L-glutamine + H2O = L-glutamate + NH4(+). It carries out the reaction UTP + NH4(+) + ATP = CTP + ADP + phosphate + 2 H(+). Its pathway is pyrimidine metabolism; CTP biosynthesis via de novo pathway; CTP from UDP: step 2/2. Allosterically activated by GTP, when glutamine is the substrate; GTP has no effect on the reaction when ammonia is the substrate. The allosteric effector GTP functions by stabilizing the protein conformation that binds the tetrahedral intermediate(s) formed during glutamine hydrolysis. Inhibited by the product CTP, via allosteric rather than competitive inhibition. Functionally, catalyzes the ATP-dependent amination of UTP to CTP with either L-glutamine or ammonia as the source of nitrogen. Regulates intracellular CTP levels through interactions with the four ribonucleotide triphosphates. This chain is CTP synthase, found in Oleidesulfovibrio alaskensis (strain ATCC BAA-1058 / DSM 17464 / G20) (Desulfovibrio alaskensis).